The chain runs to 504 residues: Splicing factor SF3a60 homolog (504 aa).

Serine 2 bears the N-acetylserine mark. 2 disordered regions span residues 293-319 and 355-374; these read DKKH…SENA and YEEM…LESD. Acidic residues predominate over residues 356-374; that stretch reads EEMEGEREGEEANTELESD. Position 373 is a phosphoserine (serine 373). Residues 409-440 form a Matrin-type zinc finger; it reads FKCEICGNYSYWGRRAFERHFKEWRHQHGMRC.

It belongs to the SF3A3 family. As to expression, expressed at moderate levels in all sporophytic tissues with strongest expression in gametophytes.

Its subcellular location is the nucleus. In terms of biological role, splicing factor homolog to SF3a60 that may be involved in pre-spliceosome formation. Is necessary for gametic cell fate determination. The protein is Splicing factor SF3a60 homolog of Arabidopsis thaliana (Mouse-ear cress).